The primary structure comprises 131 residues: Histone H2B.2 (131 aa).

Over residues 1–20 (MAPPKAEKKPASKAPAEKKP) the composition is skewed to basic and acidic residues. Positions 1–39 (MAPPKAEKKPASKAPAEKKPAAKKTASSTDAKKRTKTRK) are disordered. N6-acetyllysine; alternate is present on residues lysine 8 and lysine 9. Glycyl lysine isopeptide (Lys-Gly) (interchain with G-Cter in SUMO); alternate cross-links involve residues lysine 8 and lysine 9. Serine 12 bears the Phosphoserine mark. At lysine 13 the chain carries N6-acetyllysine. Position 18 is an N6-acetyllysine; alternate (lysine 18). Residue lysine 18 forms a Glycyl lysine isopeptide (Lys-Gly) (interchain with G-Cter in SUMO); alternate linkage. Lysine 19 is covalently cross-linked (Glycyl lysine isopeptide (Lys-Gly) (interchain with G-Cter in SUMO)). Residue lysine 125 forms a Glycyl lysine isopeptide (Lys-Gly) (interchain with G-Cter in ubiquitin) linkage.

It belongs to the histone H2B family. The nucleosome is a histone octamer containing two molecules each of H2A, H2B, H3 and H4 assembled in one H3-H4 heterotetramer and two H2A-H2B heterodimers. The octamer wraps approximately 147 bp of DNA. Post-translationally, monoubiquitinated to form H2BK123ub1. H2BK123ub1 gives a specific tag for epigenetic transcriptional activation and is also prerequisite for H3K4me and H3K79me formation. H2BK123ub1 also modulates the formation of double-strand breaks during meiosis and is a prerequisite for DNA-damage checkpoint activation. In terms of processing, phosphorylated by STE20 to form H2BS10ph during progression through meiotic prophase. May be correlated with chromosome condensation. Acetylated by GCN5 to form H2BK11ac and H2BK16ac. H2BK16ac can also be formed by ESA1. Acetylation of N-terminal lysines and particularly formation of H2BK11acK16ac has a positive effect on transcription. Post-translationally, sumoylation to form H2BK6su or H2BK7su, and probably also H2BK16su or H2BK17su, occurs preferentially near the telomeres and represses gene transcription.

The protein localises to the nucleus. It is found in the chromosome. Core component of nucleosome. Nucleosomes wrap and compact DNA into chromatin, limiting DNA accessibility to the cellular machineries which require DNA as a template. Histones thereby play a central role in transcription regulation, DNA repair, DNA replication and chromosomal stability. DNA accessibility is regulated via a complex set of post-translational modifications of histones, also called histone code, and nucleosome remodeling. In Scheffersomyces stipitis (strain ATCC 58785 / CBS 6054 / NBRC 10063 / NRRL Y-11545) (Yeast), this protein is Histone H2B.2 (HTB2).